A 185-amino-acid polypeptide reads, in one-letter code: Peptidyl-tRNA hydrolase (185 aa).

Y15 is a tRNA binding site. H20 functions as the Proton acceptor in the catalytic mechanism. Y64, N66, and N112 together coordinate tRNA.

The protein belongs to the PTH family. In terms of assembly, monomer.

It localises to the cytoplasm. It catalyses the reaction an N-acyl-L-alpha-aminoacyl-tRNA + H2O = an N-acyl-L-amino acid + a tRNA + H(+). Functionally, hydrolyzes ribosome-free peptidyl-tRNAs (with 1 or more amino acids incorporated), which drop off the ribosome during protein synthesis, or as a result of ribosome stalling. Its function is as follows. Catalyzes the release of premature peptidyl moieties from peptidyl-tRNA molecules trapped in stalled 50S ribosomal subunits, and thus maintains levels of free tRNAs and 50S ribosomes. The chain is Peptidyl-tRNA hydrolase from Porphyromonas gingivalis (strain ATCC BAA-308 / W83).